Reading from the N-terminus, the 210-residue chain is Regulator of G-protein signaling 17 (210 aa).

Residues 1–21 (MRKRQQSQNEGTPAVSQAPGN) are disordered. One can recognise an RGS domain in the interval 84-200 (NFDKMMKAPA…LNSQIYKSFV (117 aa)). Residue tyrosine 137 is modified to Phosphotyrosine.

Interacts with GNAI1 and GNAQ. Interacts with GNAZ and GNAI2. Interacts with OPRM1. Forms a complex with mu-opioid receptors and G(alpha)z/i2 subunits, including GNAZ and GNAI2; the formation of this complex results in mu-opioid receptor desensitization. Interacts with HINT1. Post-translationally, N- and O-glycosylated in synapsomal membranes. Serine phosphorylated in synapsomal membranes. In terms of processing, sumoylated with SUMO1 and SUM02 in synaptosomes. The sumoylated forms act as a scaffold for sequestering mu-opioid receptor-activated G(alpha) subunits. Desumoylated by HINT1. Predominantly expressed in the cerebellum. Also expressed in the cortex and medulla. Weakly expressed in a number of peripheral tissues notably spleen, lung and leukocytes.

It localises to the membrane. The protein localises to the synapse. It is found in the synaptosome. The protein resides in the nucleus. Its subcellular location is the cytoplasm. Regulates G protein-coupled receptor signaling cascades, including signaling via muscarinic acetylcholine receptor CHRM2 and dopamine receptor DRD2. Inhibits signal transduction by increasing the GTPase activity of G protein alpha subunits, thereby driving them into their inactive GDP-bound form. Binds selectively to GNAZ and GNAI2 subunits, accelerates their GTPase activity and regulates their signaling activities. Negatively regulates mu-opioid receptor-mediated activation of the G-proteins. This chain is Regulator of G-protein signaling 17 (RGS17), found in Homo sapiens (Human).